A 118-amino-acid chain; its full sequence is Ribosome-binding factor A (118 aa).

This sequence belongs to the RbfA family. As to quaternary structure, monomer. Binds 30S ribosomal subunits, but not 50S ribosomal subunits or 70S ribosomes.

The protein resides in the cytoplasm. Functionally, one of several proteins that assist in the late maturation steps of the functional core of the 30S ribosomal subunit. Associates with free 30S ribosomal subunits (but not with 30S subunits that are part of 70S ribosomes or polysomes). Required for efficient processing of 16S rRNA. May interact with the 5'-terminal helix region of 16S rRNA. This is Ribosome-binding factor A from Bacillus cereus (strain AH187).